The sequence spans 59 residues: Ribosome modulation factor (59 aa).

It belongs to the ribosome modulation factor family.

It is found in the cytoplasm. Its function is as follows. During stationary phase, converts 70S ribosomes to an inactive dimeric form (100S ribosomes). This chain is Ribosome modulation factor, found in Aeromonas veronii (strain B565).